The sequence spans 137 residues: Mandibular organ-inhibiting hormone (137 aa).

A signal peptide spans methionine 1 to glycine 26. Position 63 is a pyrrolidone carboxylic acid (glutamine 63). Cystine bridges form between cysteine 69–cysteine 105, cysteine 85–cysteine 101, and cysteine 88–cysteine 114. The residue at position 134 (valine 134) is a Valine amide.

The protein belongs to the arthropod CHH/MIH/GIH/VIH hormone family. In terms of tissue distribution, produced by the medulla terminalis X-organ in the eyestalks and transported to the sinus gland where it is stored and released.

The protein localises to the secreted. Its function is as follows. Represses the synthesis of methyl farnesoate, the precursor of insect juvenile hormone III in the mandibular organ. Also has hyperglycemic activity. This is Mandibular organ-inhibiting hormone from Libinia emarginata (Portly spider crab).